A 377-amino-acid chain; its full sequence is Succinyl-diaminopimelate desuccinylase (377 aa).

Zn(2+) is bound at residue histidine 66. Aspartate 68 is a catalytic residue. Aspartate 99 contributes to the Zn(2+) binding site. Glutamate 133 functions as the Proton acceptor in the catalytic mechanism. Glutamate 134, glutamate 162, and histidine 348 together coordinate Zn(2+).

The protein belongs to the peptidase M20A family. DapE subfamily. In terms of assembly, homodimer. Zn(2+) is required as a cofactor. Requires Co(2+) as cofactor.

It catalyses the reaction N-succinyl-(2S,6S)-2,6-diaminopimelate + H2O = (2S,6S)-2,6-diaminopimelate + succinate. Its pathway is amino-acid biosynthesis; L-lysine biosynthesis via DAP pathway; LL-2,6-diaminopimelate from (S)-tetrahydrodipicolinate (succinylase route): step 3/3. Catalyzes the hydrolysis of N-succinyl-L,L-diaminopimelic acid (SDAP), forming succinate and LL-2,6-diaminopimelate (DAP), an intermediate involved in the bacterial biosynthesis of lysine and meso-diaminopimelic acid, an essential component of bacterial cell walls. The sequence is that of Succinyl-diaminopimelate desuccinylase from Bordetella avium (strain 197N).